The sequence spans 154 residues: Transcriptional repressor NrdR (154 aa).

A zinc finger lies at Cys-3–Cys-34. An ATP-cone domain is found at Leu-49 to Asp-139.

Belongs to the NrdR family. Requires Zn(2+) as cofactor.

Its function is as follows. Negatively regulates transcription of bacterial ribonucleotide reductase nrd genes and operons by binding to NrdR-boxes. In Chelativorans sp. (strain BNC1), this protein is Transcriptional repressor NrdR.